We begin with the raw amino-acid sequence, 793 residues long: Signal transducer and activator of transcription 5A (793 aa).

Tyr90 bears the Phosphotyrosine mark. Phosphoserine is present on Ser128. Residues 589-686 (WNDGAILGFV…EVFAKYYTPV (98 aa)) form the SH2 domain. Phosphotyrosine occurs at positions 682 and 694. Position 779 is a phosphoserine (Ser779).

It belongs to the transcription factor STAT family. As to quaternary structure, forms a homodimer or a heterodimer with a related family member. Interacts with NCOA1 and SOCS7. Binds NR3C1. Interacts with ERBB4. Interacts with EBF4. Interacts with CD69. ISGylated. In terms of processing, tyrosine phosphorylated in response to KITLG/SCF, IL2, IL3, IL7, IL15, CSF2/GMCSF, GH1, PRL, EPO and THPO. Activated KIT promotes phosphorylation on tyrosine residues and subsequent translocation to the nucleus. Tyrosine phosphorylated in response to constitutively activated FGFR1, FGFR2, FGFR3 and FGFR4. Tyrosine phosphorylation is required for DNA-binding activity and dimerization. Serine phosphorylation is also required for maximal transcriptional activity. Tyrosine phosphorylated in response to signaling via activated FLT3; wild-type FLT3 results in much weaker phosphorylation than constitutively activated mutant FLT3. Alternatively, can be phosphorylated by JAK2 at Tyr-694. As to expression, in the virgin, found in most tissues except brain and muscle. During lactation, abundantly found in mammary tissue, as well as in other secretory organs such as salivary gland and seminal vesicle.

It is found in the cytoplasm. It localises to the nucleus. Its function is as follows. Carries out a dual function: signal transduction and activation of transcription. Mediates cellular responses to the cytokine KITLG/SCF and other growth factors. May mediate cellular responses to activated FGFR1, FGFR2, FGFR3 and FGFR4. Binds to the GAS element and activates PRL-induced transcription. Regulates the expression of milk proteins during lactation. The sequence is that of Signal transducer and activator of transcription 5A (Stat5a) from Mus musculus (Mouse).